The sequence spans 168 residues: CS3 fimbrial subunit A (168 aa).

The N-terminal stretch at 1–22 (MLKIKYLLIGLSLSAMSSYSLA) is a signal peptide.

In terms of processing, a longer minor form, starting at amino acid 15, has been detected by amino acid sequencing. This is probably due to alternative processing of the signal peptide.

Its subcellular location is the fimbrium. Fimbriae (also called pili), polar filaments radiating from the surface of the bacterium to a length of 0.5-1.5 micrometers and numbering 100-300 per cell, enable bacteria to colonize the epithelium of specific host organs. The chain is CS3 fimbrial subunit A from Escherichia coli.